A 220-amino-acid chain; its full sequence is GTP cyclohydrolase 1 (220 aa).

3 residues coordinate Zn(2+): cysteine 109, histidine 112, and cysteine 180.

The protein belongs to the GTP cyclohydrolase I family. As to quaternary structure, toroid-shaped homodecamer, composed of two pentamers of five dimers.

It catalyses the reaction GTP + H2O = 7,8-dihydroneopterin 3'-triphosphate + formate + H(+). It participates in cofactor biosynthesis; 7,8-dihydroneopterin triphosphate biosynthesis; 7,8-dihydroneopterin triphosphate from GTP: step 1/1. This Yersinia enterocolitica serotype O:8 / biotype 1B (strain NCTC 13174 / 8081) protein is GTP cyclohydrolase 1.